The following is a 480-amino-acid chain: Glutamate--tRNA ligase (480 aa).

The short motif at 21 to 31 (PSPTGYLHVGG) is the 'HIGH' region element. Positions 110, 112, 137, and 139 each coordinate Zn(2+). The 'KMSKS' region signature appears at 248–252 (KLSKR). Lys-251 contacts ATP.

It belongs to the class-I aminoacyl-tRNA synthetase family. Glutamate--tRNA ligase type 1 subfamily. In terms of assembly, monomer. Zn(2+) is required as a cofactor.

The protein localises to the cytoplasm. The catalysed reaction is tRNA(Glu) + L-glutamate + ATP = L-glutamyl-tRNA(Glu) + AMP + diphosphate. In terms of biological role, catalyzes the attachment of glutamate to tRNA(Glu) in a two-step reaction: glutamate is first activated by ATP to form Glu-AMP and then transferred to the acceptor end of tRNA(Glu). The polypeptide is Glutamate--tRNA ligase (Haemophilus influenzae (strain PittEE)).